We begin with the raw amino-acid sequence, 363 residues long: MSKKNNLLVAASGTGGHIFPALAVTKEVEDKWNIHWLGVHKRLDANFIPKKYNLRTLNIKTPRKNIFLFYQYFRILMSTFQVIWILKEEKINLVFTTGGYISAPTIIASKLLRIPVIIHESNLIPGMVTKNFGFLCNYVLLGFKRTNSYLKNCKTIFTGTPLREQFYKSNLLPDWVPQGKGPLLIVMGGSQGAKAINQILYESLDFLMKKQFRIVHIIGECNQKYFNLNTSNNYVQKKFTNEIAALIQNCDLVISRSGAGTINELIESEKPSILIPYPNSKNNHQEKNAMILAESGGSILINQNNISKEVFEETLERIFKIKSKKGKNHYEILDLMKKNMENNKKIKSKIEIKKFINYFLKEF.

Residues 14–16 (TGG), Asn-122, Arg-163, Ser-190, and Gln-285 contribute to the UDP-N-acetyl-alpha-D-glucosamine site.

The protein belongs to the glycosyltransferase 28 family. MurG subfamily.

Its subcellular location is the cell inner membrane. It catalyses the reaction di-trans,octa-cis-undecaprenyl diphospho-N-acetyl-alpha-D-muramoyl-L-alanyl-D-glutamyl-meso-2,6-diaminopimeloyl-D-alanyl-D-alanine + UDP-N-acetyl-alpha-D-glucosamine = di-trans,octa-cis-undecaprenyl diphospho-[N-acetyl-alpha-D-glucosaminyl-(1-&gt;4)]-N-acetyl-alpha-D-muramoyl-L-alanyl-D-glutamyl-meso-2,6-diaminopimeloyl-D-alanyl-D-alanine + UDP + H(+). The protein operates within cell wall biogenesis; peptidoglycan biosynthesis. In terms of biological role, cell wall formation. Catalyzes the transfer of a GlcNAc subunit on undecaprenyl-pyrophosphoryl-MurNAc-pentapeptide (lipid intermediate I) to form undecaprenyl-pyrophosphoryl-MurNAc-(pentapeptide)GlcNAc (lipid intermediate II). This chain is UDP-N-acetylglucosamine--N-acetylmuramyl-(pentapeptide) pyrophosphoryl-undecaprenol N-acetylglucosamine transferase, found in Prochlorococcus marinus (strain MIT 9301).